The following is a 119-amino-acid chain: Large ribosomal subunit protein uL14c (119 aa).

This sequence belongs to the universal ribosomal protein uL14 family. In terms of assembly, part of the 50S ribosomal subunit.

The protein localises to the plastid. The protein resides in the chloroplast. Functionally, binds to 23S rRNA. This Ostreococcus tauri protein is Large ribosomal subunit protein uL14c.